A 1107-amino-acid polypeptide reads, in one-letter code: Probable chromatin-remodeling complex ATPase chain (1107 aa).

Disordered stretches follow at residues 1–124 and 177–217; these read MAKP…KREK and GNQS…GSGG. Composition is skewed to acidic residues over residues 8–25, 33–43, 53–65, and 89–114; these read DEEE…EEQS, GEEEDEEEEEA, GGEE…EEIE, and EGDE…DEAE. Residues 121 to 147 are a coiled coil; it reads KREKARLKEMQKLKKQKIQEILDTQNA. The span at 183–193 shows a compositional bias: basic residues; sequence KKPRGRGRHAS. Residues 197–211 are compositionally biased toward acidic residues; it reads EEEEDEEYLKEEEDA. The Helicase ATP-binding domain occupies 243–408; the sequence is IRLYENGING…WSLLNFLLPE (166 aa). 256–263 lines the ATP pocket; the sequence is DEMGLGKT. The DEAH box motif lies at 359–362; sequence DEAH. Residues 536 to 687 enclose the Helicase C-terminal domain; that stretch reads LLDKLLPKLK…ALVIQQGRLA (152 aa). SANT domains lie at 877–929 and 978–1039; these read EGFA…ERYK and QNKG…DTLI. The stretch at 1029–1067 forms a coiled coil; sequence QELARRCDTLIRLVEKENQEYDEQERQARKDKRMAKNMT. The segment at 1049 to 1107 is disordered; the sequence is YDEQERQARKDKRMAKNMTPTKRSALRVSEGETTPSNSFKRRRQSLMDDYVGSGRRKRG.

This sequence belongs to the SNF2/RAD54 helicase family. ISWI subfamily.

The protein resides in the nucleus. Its function is as follows. Possesses intrinsic ATP-dependent nucleosome-remodeling activity. Constitutes the catalytic subunit of several complexes capable of forming ordered nucleosome arrays on chromatin in vitro. This is Probable chromatin-remodeling complex ATPase chain from Oryza sativa subsp. japonica (Rice).